Consider the following 189-residue polypeptide: Ribosomal RNA large subunit methyltransferase E (189 aa).

5 residues coordinate S-adenosyl-L-methionine: Gly45, Phe47, Asp64, Asp82, and Asp104. Catalysis depends on Lys144, which acts as the Proton acceptor.

It belongs to the class I-like SAM-binding methyltransferase superfamily. RNA methyltransferase RlmE family.

Its subcellular location is the cytoplasm. It catalyses the reaction uridine(2552) in 23S rRNA + S-adenosyl-L-methionine = 2'-O-methyluridine(2552) in 23S rRNA + S-adenosyl-L-homocysteine + H(+). Its function is as follows. Specifically methylates the uridine in position 2552 of 23S rRNA at the 2'-O position of the ribose in the fully assembled 50S ribosomal subunit. In Borreliella afzelii (strain PKo) (Borrelia afzelii), this protein is Ribosomal RNA large subunit methyltransferase E.